The sequence spans 64 residues: Large ribosomal subunit protein bL35 (64 aa).

The disordered stretch occupies residues Met1–Ile22.

This sequence belongs to the bacterial ribosomal protein bL35 family.

This chain is Large ribosomal subunit protein bL35, found in Mycobacterium tuberculosis (strain ATCC 25177 / H37Ra).